A 329-amino-acid chain; its full sequence is UPF0421 protein SH1063 (329 aa).

5 consecutive transmembrane segments (helical) span residues 25–45, 60–80, 87–107, 108–128, and 131–151; these read LFCL…IVTI, LPAT…FGDP, FSAL…GTTV, AVLT…FNFF, and LLTA…VLPP.

Belongs to the UPF0421 family.

It is found in the cell membrane. The sequence is that of UPF0421 protein SH1063 from Staphylococcus haemolyticus (strain JCSC1435).